A 615-amino-acid polypeptide reads, in one-letter code: Sodium-dependent neutral amino acid transporter B(0)AT3 (615 aa).

Residues 1–26 are Cytoplasmic-facing; that stretch reads MAQASGMDPLVDIEDERPKWDNKLQY. Residues 27–47 form a helical membrane-spanning segment; it reads LLSCIGFAVGLGNIWRFPYLC. Over 48 to 52 the chain is Extracellular; that stretch reads QTHGG. A helical membrane pass occupies residues 53-73; that stretch reads GAFLIPYFIALVFEGIPLFYI. Residues 74 to 105 are Cytoplasmic-facing; sequence ELAIGQRLRRGSIGVWKTISPYLGGVGLGCFS. A helical transmembrane segment spans residues 106–126; the sequence is VSFLVSLYYNTVLLWVLWFFL. The Extracellular portion of the chain corresponds to 127 to 177; sequence NSFQHPLPWSTCPLDLNRTGFVQECQSSGTVSYFWYRQTLNITSDISNTGT. 2 N-linked (GlcNAc...) asparagine glycosylation sites follow: N143 and N167. A helical transmembrane segment spans residues 178 to 198; sequence IQWKLFLCLVACWSTVYLCVI. Residues 199–206 lie on the Cytoplasmic side of the membrane; the sequence is RGIESTGK. A helical membrane pass occupies residues 207 to 227; sequence VIYFTALFPYLVLTIFLIRGL. The Extracellular portion of the chain corresponds to 228–255; sequence TLPGATEGLIYLFTPNMKTLQNPRVWLD. Residues 256 to 276 form a helical membrane-spanning segment; that stretch reads AATQIFFSLSLAFGGHIAFAS. Topologically, residues 277 to 288 are cytoplasmic; sequence YNPPRNNCEKDA. The chain crosses the membrane as a helical span at residues 289–309; the sequence is VIIALVNSMTSLYASIAIFSV. At 310–397 the chain is on the extracellular side; it reads MGFKASNDYG…FTEAVLHMPG (88 aa). Residue N353 is glycosylated (N-linked (GlcNAc...) asparagine). The helical transmembrane segment at 398–418 threads the bilayer; that stretch reads ASVWSVLFFGMLFTLGLSSMF. Topologically, residues 419–441 are cytoplasmic; the sequence is GNMEGVITPLLDMGILPKGIPKE. A helical transmembrane segment spans residues 442 to 462; it reads VMTGVICFACFLSAICFTLQS. Topologically, residues 463–472 are extracellular; the sequence is GGYWLEIFDS. The helical transmembrane segment at 473–493 threads the bilayer; that stretch reads FAASLNLIIFAFMEVVGVIHI. At 494–520 the chain is on the cytoplasmic side; that stretch reads YGMKRFCDDIEWMTGRRPGLYWQVTWR. The helical transmembrane segment at 521-541 threads the bilayer; the sequence is VVSPMLLFGIFLSYIVLLIQT. The Extracellular portion of the chain corresponds to 542–570; the sequence is PPSYKAWNPQYEHFPSREEKFYPGWVQVT. Residues 571-591 traverse the membrane as a helical segment; it reads CVLLSFLPSLWVPGVALAQLL. The Cytoplasmic segment spans residues 592-615; sequence SQYKQRWKATHLESGLKLQESRGC.

Belongs to the sodium:neurotransmitter symporter (SNF) (TC 2.A.22) family. SLC6A18 subfamily. Interacts with CLTRN; this interaction regulates the trafficking of SLC6A18 to the cell membrane and its activity. Expressed predominantly in kidney.

It is found in the apical cell membrane. The protein localises to the cell membrane. The enzyme catalyses L-alanine(out) + chloride(out) + 2 Na(+)(out) = L-alanine(in) + chloride(in) + 2 Na(+)(in). It catalyses the reaction glycine(out) + chloride(out) + 2 Na(+)(out) = glycine(in) + chloride(in) + 2 Na(+)(in). It carries out the reaction L-methionine(out) + chloride(out) + 2 Na(+)(out) = L-methionine(in) + chloride(in) + 2 Na(+)(in). The catalysed reaction is L-valine(out) + chloride(out) + 2 Na(+)(out) = L-valine(in) + chloride(in) + 2 Na(+)(in). The enzyme catalyses L-isoleucine(out) + chloride(out) + 2 Na(+)(out) = L-isoleucine(in) + chloride(in) + 2 Na(+)(in). It catalyses the reaction L-serine(out) + chloride(out) + 2 Na(+)(out) = L-serine(in) + chloride(in) + 2 Na(+)(in). It carries out the reaction L-leucine(out) + chloride(out) + 2 Na(+)(out) = L-leucine(in) + chloride(in) + 2 Na(+)(in). Functionally, symporter that transports one amino acid molecule together with two sodium and one chloride ions in kidneys and plays a role in the neutral amino acids reabsorption. Preferentially transports neutral amino acids such as L-glycine and L-alanine but also other neutral amino acids. Required CLTRN for cell surface expression and for its amino acid transporter activity. The transport mechanism is pH-independent. This is Sodium-dependent neutral amino acid transporter B(0)AT3 from Mus musculus (Mouse).